Reading from the N-terminus, the 347-residue chain is Probable dual-specificity RNA methyltransferase RlmN (347 aa).

The active-site Proton acceptor is Glu91. The Radical SAM core domain occupies 97–327; that stretch reads YKYGNSICVS…ATVRREMGSD (231 aa). A disulfide bond links Cys104 and Cys332. Residues Cys111, Cys115, and Cys118 each contribute to the [4Fe-4S] cluster site. S-adenosyl-L-methionine contacts are provided by residues 158 to 159, Ser190, 213 to 215, and Asn289; these read GE and SLH. The S-methylcysteine intermediate role is filled by Cys332.

This sequence belongs to the radical SAM superfamily. RlmN family. The cofactor is [4Fe-4S] cluster.

Its subcellular location is the cytoplasm. The enzyme catalyses adenosine(2503) in 23S rRNA + 2 reduced [2Fe-2S]-[ferredoxin] + 2 S-adenosyl-L-methionine = 2-methyladenosine(2503) in 23S rRNA + 5'-deoxyadenosine + L-methionine + 2 oxidized [2Fe-2S]-[ferredoxin] + S-adenosyl-L-homocysteine. The catalysed reaction is adenosine(37) in tRNA + 2 reduced [2Fe-2S]-[ferredoxin] + 2 S-adenosyl-L-methionine = 2-methyladenosine(37) in tRNA + 5'-deoxyadenosine + L-methionine + 2 oxidized [2Fe-2S]-[ferredoxin] + S-adenosyl-L-homocysteine. Its function is as follows. Specifically methylates position 2 of adenine 2503 in 23S rRNA and position 2 of adenine 37 in tRNAs. This chain is Probable dual-specificity RNA methyltransferase RlmN, found in Clostridium perfringens (strain 13 / Type A).